A 285-amino-acid polypeptide reads, in one-letter code: Glutamate racemase (285 aa).

Residues 28–29 (DS) and 60–61 (YG) each bind substrate. Cys92 functions as the Proton donor/acceptor in the catalytic mechanism. 93–94 (NT) contributes to the substrate binding site. Residues Arg104 and 113–119 (GVVPAIK) each bind UDP-N-acetyl-alpha-D-muramoyl-L-alanine. The active-site Proton donor/acceptor is the Cys204. 205-206 (TH) provides a ligand contact to substrate.

Belongs to the aspartate/glutamate racemases family. In terms of assembly, monomer.

The catalysed reaction is L-glutamate = D-glutamate. It functions in the pathway cell wall biogenesis; peptidoglycan biosynthesis. With respect to regulation, the low basal catalytic activity in increased 1000-fold in the presence of UDP-MurNAc-L-Ala, the product of the preceding enzyme in the peptidoglycan biosynthesis. Its function is as follows. Provides the (R)-glutamate required for cell wall biosynthesis. In Escherichia coli (strain K12), this protein is Glutamate racemase.